Reading from the N-terminus, the 345-residue chain is Flap endonuclease 1 (345 aa).

Positions 1–103 (MGIKQLSKLL…KELEKRKERR (103 aa)) are N-domain. Residue aspartate 34 coordinates Mg(2+). Positions 47 and 69 each coordinate DNA. Residues aspartate 85, glutamate 157, glutamate 159, aspartate 178, and aspartate 180 each contribute to the Mg(2+) site. Residues 121 to 252 (LMEMYDKRKT…KKALGLIKKH (132 aa)) are I-domain. DNA is bound at residue glutamate 157. DNA is bound by residues glycine 230 and aspartate 232. A Mg(2+)-binding site is contributed by aspartate 232. Residues 333–341 (TQGRLDCFI) are interaction with PCNA.

This sequence belongs to the XPG/RAD2 endonuclease family. FEN1 subfamily. As to quaternary structure, interacts with PCNA. Three molecules of FEN1 bind to one PCNA trimer with each molecule binding to one PCNA monomer. PCNA stimulates the nuclease activity without altering cleavage specificity. It depends on Mg(2+) as a cofactor. Post-translationally, phosphorylated. Phosphorylation upon DNA damage induces relocalization to the nuclear plasma.

The protein localises to the nucleus. Its subcellular location is the nucleolus. It localises to the nucleoplasm. The protein resides in the mitochondrion. Its function is as follows. Structure-specific nuclease with 5'-flap endonuclease and 5'-3' exonuclease activities involved in DNA replication and repair. During DNA replication, cleaves the 5'-overhanging flap structure that is generated by displacement synthesis when DNA polymerase encounters the 5'-end of a downstream Okazaki fragment. It enters the flap from the 5'-end and then tracks to cleave the flap base, leaving a nick for ligation. Also involved in the long patch base excision repair (LP-BER) pathway, by cleaving within the apurinic/apyrimidinic (AP) site-terminated flap. Acts as a genome stabilization factor that prevents flaps from equilibrating into structures that lead to duplications and deletions. Also possesses 5'-3' exonuclease activity on nicked or gapped double-stranded DNA, and exhibits RNase H activity. Also involved in replication and repair of rDNA and in repairing mitochondrial DNA. This is Flap endonuclease 1 from Encephalitozoon cuniculi (strain GB-M1) (Microsporidian parasite).